Reading from the N-terminus, the 162-residue chain is Ribosome maturation factor RimM (162 aa).

A PRC barrel domain is found at 86-160 (EGRYYYFALI…GIHVDPIPGL (75 aa)).

Belongs to the RimM family. As to quaternary structure, binds ribosomal protein uS19.

The protein resides in the cytoplasm. Its function is as follows. An accessory protein needed during the final step in the assembly of 30S ribosomal subunit, possibly for assembly of the head region. Essential for efficient processing of 16S rRNA. May be needed both before and after RbfA during the maturation of 16S rRNA. It has affinity for free ribosomal 30S subunits but not for 70S ribosomes. In Thermus thermophilus (strain ATCC BAA-163 / DSM 7039 / HB27), this protein is Ribosome maturation factor RimM.